The chain runs to 445 residues: 6-phosphogluconate dehydrogenase, decarboxylating (445 aa).

NADP(+) contacts are provided by residues 1 to 4 (AVMG), 22 to 24 (NRS), 63 to 65 (VKA), and N91. Substrate-binding positions include N91 and 117–119 (SGG). Catalysis depends on K172, which acts as the Proton acceptor. 175–176 (HN) is a binding site for substrate. E179 acts as the Proton donor in catalysis. 5 residues coordinate substrate: Y180, K249, R276, R434, and H440.

The protein belongs to the 6-phosphogluconate dehydrogenase family. In terms of assembly, homodimer.

The enzyme catalyses 6-phospho-D-gluconate + NADP(+) = D-ribulose 5-phosphate + CO2 + NADPH. The protein operates within carbohydrate degradation; pentose phosphate pathway; D-ribulose 5-phosphate from D-glucose 6-phosphate (oxidative stage): step 3/3. In terms of biological role, catalyzes the oxidative decarboxylation of 6-phosphogluconate to ribulose 5-phosphate and CO(2), with concomitant reduction of NADP to NADPH. The sequence is that of 6-phosphogluconate dehydrogenase, decarboxylating (gnd) from Raoultella terrigena (Klebsiella terrigena).